We begin with the raw amino-acid sequence, 301 residues long: Protein ARMCX6 (301 aa).

The interval 1–6 (MGRARE) is mitochondrion outer membrane (MOM)-targeting sequence. Residues 1–7 (MGRAREM) lie on the Mitochondrial intermembrane side of the membrane. A helical; Signal-anchor membrane pass occupies residues 8 to 25 (GWMAAGLMIGAGACYCMY). A mitochondrion outer membrane (MOM)-targeting sequence region spans residues 26-36 (KLTMGRDEGNE). Residues 26-301 (KLTMGRDEGN…REMLVEAISP (276 aa)) lie on the Cytoplasmic side of the membrane. Residues 70–105 (SEDGEWDEPGAPGGTEDRRSGGGKANRAHPTKQRPF) are disordered.

It belongs to the eutherian X-chromosome-specific Armcx family.

It localises to the mitochondrion. The protein localises to the mitochondrion outer membrane. Functionally, may regulate the dynamics and distribution of mitochondria in neural cells. This is Protein ARMCX6 (Armcx6) from Rattus norvegicus (Rat).